Reading from the N-terminus, the 294-residue chain is Elongation factor Ts (294 aa).

Residues 79–82 are involved in Mg(2+) ion dislocation from EF-Tu; sequence TDFV.

It belongs to the EF-Ts family.

The protein resides in the cytoplasm. Functionally, associates with the EF-Tu.GDP complex and induces the exchange of GDP to GTP. It remains bound to the aminoacyl-tRNA.EF-Tu.GTP complex up to the GTP hydrolysis stage on the ribosome. The protein is Elongation factor Ts of Geobacillus thermodenitrificans (strain NG80-2).